Consider the following 123-residue polypeptide: RxLR effector protein Avh262 (123 aa).

The N-terminal stretch at 1 to 18 (MLPVAVVLVVFAVAVTSA) is a signal peptide. The interval 24-46 (VNPLPRRRRLKGTEEKGHHTNVN) is disordered. A RxLR-dEER motif is present at residues 30-50 (RRRLKGTEEKGHHTNVNDEER). Basic and acidic residues predominate over residues 34–46 (KGTEEKGHHTNVN). The tract at residues 60-82 (LISKLKVKINAKLLAGDSAKPAT) is biP-binding.

Belongs to the RxLR effector family. As to quaternary structure, interacts with host plant ER-luminal binding immunoglobulin proteins (BiPs) such as soybean BiP1, BiP2, BiP3 and BiP4.

The protein resides in the secreted. It is found in the host endoplasmic reticulum. Its function is as follows. Effector that suppresses plant defense responses during the early stages of pathogen infection. Suppresses cell death induced by effectors and PAMPs in plant hosts. Avh262 stabilizes endoplasmic reticulum (ER)-luminal binding immunoglobulin proteins (BiPs), which act as negative regulators of plant resistance to Phytophthora. By stabilizing BiPs, Avh262 suppresses ER stress-triggered cell death and facilitates Phytophthora infection. In Phytophthora sojae (Soybean stem and root rot agent), this protein is RxLR effector protein Avh262.